The chain runs to 632 residues: Chaperone protein HtpG (632 aa).

The tract at residues 1 to 339 (MTQQTMSFQA…SSDLPLNVSR (339 aa)) is a; substrate-binding. Residues 340–559 (EILQESRDVK…DNDMSGYLQR (220 aa)) are b. A c region spans residues 560 to 632 (MLKAAGQSAP…TNALLLSRAA (73 aa)).

The protein belongs to the heat shock protein 90 family. As to quaternary structure, homodimer.

The protein resides in the cytoplasm. Molecular chaperone. Has ATPase activity. The protein is Chaperone protein HtpG of Burkholderia pseudomallei (strain 1106a).